The chain runs to 463 residues: Gamma-aminobutyric acid receptor subunit alpha-5 (463 aa).

The signal sequence occupies residues 1-25; it reads MDNGMLSRFIMTQTLLVFCISMTLS. Residues 26–260 lie on the Extracellular side of the membrane; the sequence is SHFGFSQMPT…FHLKRKIGYF (235 aa). The N-linked (GlcNAc...) asparagine glycan is linked to asparagine 45. Arginine 101 lines the 4-aminobutanoate pocket. Residue asparagine 145 is glycosylated (N-linked (GlcNAc...) asparagine). Threonine 164 is a binding site for 4-aminobutanoate. Cysteine 173 and cysteine 187 are oxidised to a cystine. N-linked (GlcNAc...) asparagine glycans are attached at residues asparagine 207 and asparagine 236. A run of 3 helical transmembrane segments spans residues 261 to 281, 287 to 308, and 319 to 340; these read VIQTYLPCIMTVILSQVSFWL, PARTVFGVTTVLTMTTLSISAR, and AMDWFIAVCYAFVFSALIEFAT. Topologically, residues 341-428 are cytoplasmic; the sequence is VNYFTKRGWA…TYNSISKIDK (88 aa). A Glycyl lysine isopeptide (Lys-Gly) (interchain with G-Cter in ubiquitin) cross-link involves residue lysine 355. The segment at 387–408 is disordered; that stretch reads PNIPKEQPPAGTANAPTVSIKA. A helical transmembrane segment spans residues 429–449; sequence MSRIVFPILFGTFNLVYWATY.

This sequence belongs to the ligand-gated ion channel (TC 1.A.9) family. Gamma-aminobutyric acid receptor (TC 1.A.9.5) subfamily. GABRA5 sub-subfamily. As to quaternary structure, heteropentamer, formed by a combination of alpha (GABRA1-6), beta (GABRB1-3), gamma (GABRG1-3), delta (GABRD), epsilon (GABRE), rho (GABRR1-3), pi (GABRP) and theta (GABRQ) chains, each subunit exhibiting distinct physiological and pharmacological properties. In terms of tissue distribution, expressed in brain, in hippocampal pyramidal neurons.

It is found in the postsynaptic cell membrane. The protein resides in the cell membrane. It carries out the reaction chloride(in) = chloride(out). In terms of biological role, alpha subunit of the heteropentameric ligand-gated chloride channel gated by gamma-aminobutyric acid (GABA), a major inhibitory neurotransmitter in the brain. GABA-gated chloride channels, also named GABA(A) receptors (GABAAR), consist of five subunits arranged around a central pore and contain GABA active binding site(s) located at the alpha and beta subunit interface(s). When activated by GABA, GABAARs selectively allow the flow of chloride anions across the cell membrane down their electrochemical gradient. GABAARs containing alpha-5/GABRA5 are mainly extrasynaptic and contribute to the tonic GABAergic inhibition of the hippocampus. Extrasynaptic alpha-5-containing GABAARs in CA1 pyramidal neurons play a role in learning and memory processes. The chain is Gamma-aminobutyric acid receptor subunit alpha-5 from Mus musculus (Mouse).